The sequence spans 595 residues: Aspartate--tRNA(Asp/Asn) ligase (595 aa).

Residue E175 coordinates L-aspartate. The aspartate stretch occupies residues 199-202; it reads QQYK. L-aspartate is bound by residues R221 and H454. 221–223 contacts ATP; it reads RDE. Residue E488 participates in ATP binding. R495 is an L-aspartate binding site. 540–543 is an ATP binding site; the sequence is GIDR.

This sequence belongs to the class-II aminoacyl-tRNA synthetase family. Type 1 subfamily. As to quaternary structure, homodimer.

Its subcellular location is the cytoplasm. It carries out the reaction tRNA(Asx) + L-aspartate + ATP = L-aspartyl-tRNA(Asx) + AMP + diphosphate. Its function is as follows. Aspartyl-tRNA synthetase with relaxed tRNA specificity since it is able to aspartylate not only its cognate tRNA(Asp) but also tRNA(Asn). Reaction proceeds in two steps: L-aspartate is first activated by ATP to form Asp-AMP and then transferred to the acceptor end of tRNA(Asp/Asn). The polypeptide is Aspartate--tRNA(Asp/Asn) ligase (Agrobacterium fabrum (strain C58 / ATCC 33970) (Agrobacterium tumefaciens (strain C58))).